We begin with the raw amino-acid sequence, 736 residues long: Prolyl 3-hydroxylase 3 (736 aa).

An N-terminal signal peptide occupies residues 1–20 (MLRLLRPLLLLLLLPPPGSP). TPR repeat units follow at residues 37–70 (PDLL…QAAL), 154–187 (REPY…NPMH), and 216–249 (HWAA…SLAQ). The interval 253 to 275 (CRADCEGPEEQQGAEEEEDGAAS) is disordered. Over residues 258–272 (EGPEEQQGAEEEEDG) the composition is skewed to acidic residues. The stretch at 316 to 349 (PNQLRRLHEAHAQVGNLSQAIENVLSVLLFYPED) is one TPR 4 repeat. N-linked (GlcNAc...) asparagine glycosylation is found at asparagine 331 and asparagine 462. Residues 561 to 675 (THLVCRSAIE…RCALALWHTW (115 aa)) enclose the Fe2OG dioxygenase domain. Residues histidine 584, aspartate 586, and histidine 656 each contribute to the Fe cation site. The active site involves arginine 666. Positions 681-709 (EQEWIEAKELLQESQEEEEEEEEEMPSKD) form a coiled coil. The segment at 689 to 736 (ELLQESQEEEEEEEEEMPSKDPSPEPPSRRHQRVQDKTGRAPRVREEL) is disordered. The span at 694 to 704 (SQEEEEEEEEE) shows a compositional bias: acidic residues. Residues 721–736 (RVQDKTGRAPRVREEL) show a composition bias toward basic and acidic residues. Positions 733 to 736 (REEL) match the Prevents secretion from ER motif.

Belongs to the leprecan family. Identified in a complex with PLOD1 and P3H4. It depends on Fe cation as a cofactor. Requires L-ascorbate as cofactor. As to expression, detected in fetal cartilage (at protein level). Weak expression in heart, lung, ovary and skeletal muscle.

The protein resides in the endoplasmic reticulum. It catalyses the reaction L-prolyl-[collagen] + 2-oxoglutarate + O2 = trans-3-hydroxy-L-prolyl-[collagen] + succinate + CO2. Functionally, part of a complex composed of PLOD1, P3H3 and P3H4 that catalyzes hydroxylation of lysine residues in collagen alpha chains and is required for normal assembly and cross-linkling of collagen fibrils. Required for normal hydroxylation of lysine residues in type I collagen chains in skin, bone, tendon, aorta and cornea. Required for normal skin stability via its role in hydroxylation of lysine residues in collagen alpha chains and in collagen fibril assembly. Apparently not required for normal prolyl 3-hydroxylation on collagen chains, possibly because it functions redundantly with other prolyl 3-hydroxylases. In Homo sapiens (Human), this protein is Prolyl 3-hydroxylase 3.